We begin with the raw amino-acid sequence, 170 residues long: Urease accessory protein UreE (170 aa).

It belongs to the UreE family.

Its subcellular location is the cytoplasm. Functionally, involved in urease metallocenter assembly. Binds nickel. Probably functions as a nickel donor during metallocenter assembly. The sequence is that of Urease accessory protein UreE from Helicobacter pylori (strain ATCC 700392 / 26695) (Campylobacter pylori).